Consider the following 440-residue polypeptide: MRRTLVYGLGESGEAATRALLQRGERPLAADAASGEGPRRVLEELGVEGVLGAGPEVLDGVDRVVVSPGVRPRDAVLREARRRGIPVISEVGLGLELLGPGVRVAAVTGTNGKTTVVDMARHILRVAGVAHAVAGNSWRALTGCLEEVRRAGVLVLEVSSFQLHHLPPPGFEVAALLNVRPDHLNWHSSFEEYARDKLRVFGGQGPGDLALLSADDPICRRAAGGLRAEVVLVGEGETGVRDGRLLLRGEFLAGERELGFAGGHNLKNALFAAAAAARLGAGLEAIREALRGYRLKPHRMQVVAEEGGVTYIDDSKATNPAAVAAALLSLGGRPAVLILGGSEKETDFEEVLPHLGGCRAVVCQGEAGPRLRDFLSERWGGEVVLAGDLASAVEAARRLARPGDAVLLSPGCASFDQFSGYEERGEAFARLAGGRRAVRG.

Position 109 to 115 (109 to 115 (GTNGKTT)) interacts with ATP.

This sequence belongs to the MurCDEF family.

It localises to the cytoplasm. The catalysed reaction is UDP-N-acetyl-alpha-D-muramoyl-L-alanine + D-glutamate + ATP = UDP-N-acetyl-alpha-D-muramoyl-L-alanyl-D-glutamate + ADP + phosphate + H(+). It participates in cell wall biogenesis; peptidoglycan biosynthesis. Cell wall formation. Catalyzes the addition of glutamate to the nucleotide precursor UDP-N-acetylmuramoyl-L-alanine (UMA). The sequence is that of UDP-N-acetylmuramoylalanine--D-glutamate ligase from Rubrobacter xylanophilus (strain DSM 9941 / JCM 11954 / NBRC 16129 / PRD-1).